We begin with the raw amino-acid sequence, 29 residues long: Cytochrome b6-f complex subunit 8 (29 aa).

Residues 3–23 (IISLGWSSLLVVFTFSLSLVV) traverse the membrane as a helical segment.

This sequence belongs to the PetN family. As to quaternary structure, the 4 large subunits of the cytochrome b6-f complex are cytochrome b6, subunit IV (17 kDa polypeptide, PetD), cytochrome f and the Rieske protein, while the 4 small subunits are PetG, PetL, PetM and PetN. The complex functions as a dimer.

Its subcellular location is the plastid. It is found in the chloroplast thylakoid membrane. In terms of biological role, component of the cytochrome b6-f complex, which mediates electron transfer between photosystem II (PSII) and photosystem I (PSI), cyclic electron flow around PSI, and state transitions. This chain is Cytochrome b6-f complex subunit 8, found in Rhodomonas salina (Cryptomonas salina).